The sequence spans 119 residues: Small ribosomal subunit protein uS10 (119 aa).

Residue alanine 2 is modified to N-acetylalanine. Lysine 4 is covalently cross-linked (Glycyl lysine isopeptide (Lys-Gly) (interchain with G-Cter in ubiquitin)). An N6-succinyllysine; alternate modification is found at lysine 8. Lysine 8 is covalently cross-linked (Glycyl lysine isopeptide (Lys-Gly) (interchain with G-Cter in ubiquitin); alternate). At threonine 9 the chain carries Phosphothreonine. N6-acetyllysine occurs at positions 34 and 75. Position 93 is a phosphoserine (serine 93).

Belongs to the universal ribosomal protein uS10 family. As to quaternary structure, component of the 40S small ribosomal subunit. Post-translationally, polyubiquitinated by ZNF598 via 'Lys-63'-linked ubiquitin chains when a ribosome has stalled, initiating the ribosome quality control (RQC) pathway to degrade the potentially detrimental aberrant nascent polypeptide. Deubiquitinated by OTUD3 and USP21, antagonizing ZNF598 activity. Ufmylated by UFL1.

It is found in the cytoplasm. Functionally, component of the small ribosomal subunit. The ribosome is a large ribonucleoprotein complex responsible for the synthesis of proteins in the cell. In Sus scrofa (Pig), this protein is Small ribosomal subunit protein uS10 (RPS20).